The primary structure comprises 234 residues: C2H2-type zinc-finger transcription factor clz7 (234 aa).

Disordered regions lie at residues 45–99 and 118–154; these read RPEG…SRVD and SAQPDFEDWGDLGDLMPEVLPESSGTSSGAATDNGTA. 2 stretches are compositionally biased toward low complexity: residues 66–77 and 140–154; these read SQSSNTSPTSES and SSGTSSGAATDNGTA. The segment at 159–184 adopts a C2H2-type 1; degenerate zinc-finger fold; it reads NRCWDHGCNGKKFLNHSNLVRHRREN. The C2H2-type 2; degenerate zinc-finger motif lies at 191–223; that stretch reads FICPMCGAYFSRSTARNQHLEKKSCNRVRRYSN.

It belongs to the GLI C2H2-type zinc-finger protein family.

The protein localises to the nucleus. Transcription factor that probably regulates the expression of the gene cluster that mediates the biosynthesis of squalestatin S1 (SQS1, also known as zaragozic acid A), a heavily oxidized fungal polyketide that offers potent cholesterol lowering activity by targeting squalene synthase (SS). The chain is C2H2-type zinc-finger transcription factor clz7 from Cochliobolus lunatus (Filamentous fungus).